Here is a 65-residue protein sequence, read N- to C-terminus: Putative per-hexamer repeat protein 2 (65 aa).

This Mus musculus (Mouse) protein is Putative per-hexamer repeat protein 2 (Phxr2).